The following is a 425-amino-acid chain: MIDLRLLREDPDRVRASQRARGEDVALVDSLLSADERRRSSGVRFDELRAEQKGLGKLIGKAAGDEKAELLKRAEQLKTDVKAADAERDAADAETQELLQRLGNLVHPDVPVGGEEDFVTLETHGTHRDFAAEGFEPRDHLELGQLLGAIDVERGAKVSGSRFYFLTGVGALLELALVNAAIAQATAAGFTPMLTPALVRPQSMAGTGFLGQAAQDVYHLDKDDLYLVGTSEVPLAAYHMDEILDGDRLPLRYAGFSPCFRREAGSHGKDTRGIFRVHQFDKVEMFSYVLPEDSQAEHQRLLEWEKQWLTSLELPFRVIDVASADLGSSAARKYDCEAWIPTQGKYRELTSTSDCTEFQSRRLSIRVREGKKVRPLATLNGTLCAVPRTIVAILENHQQADGSVRVPEVLRPYLGGREVLEPVAK.

230-232 (TSE) lines the L-serine pocket. Residues 261–263 (RRE) and V277 contribute to the ATP site. E284 serves as a coordination point for L-serine. ATP is bound at residue 348–351 (ELTS). An L-serine-binding site is contributed by T382.

It belongs to the class-II aminoacyl-tRNA synthetase family. Type-1 seryl-tRNA synthetase subfamily. In terms of assembly, homodimer. The tRNA molecule binds across the dimer.

The protein resides in the cytoplasm. The enzyme catalyses tRNA(Ser) + L-serine + ATP = L-seryl-tRNA(Ser) + AMP + diphosphate + H(+). It carries out the reaction tRNA(Sec) + L-serine + ATP = L-seryl-tRNA(Sec) + AMP + diphosphate + H(+). It functions in the pathway aminoacyl-tRNA biosynthesis; selenocysteinyl-tRNA(Sec) biosynthesis; L-seryl-tRNA(Sec) from L-serine and tRNA(Sec): step 1/1. In terms of biological role, catalyzes the attachment of serine to tRNA(Ser). Is also able to aminoacylate tRNA(Sec) with serine, to form the misacylated tRNA L-seryl-tRNA(Sec), which will be further converted into selenocysteinyl-tRNA(Sec). In Streptomyces coelicolor (strain ATCC BAA-471 / A3(2) / M145), this protein is Serine--tRNA ligase.